Reading from the N-terminus, the 273-residue chain is Diadenylate cyclase (273 aa).

Transmembrane regions (helical) follow at residues 12-32, 37-57, and 61-81; these read LANIVDILVVWFVIYKVIMLI, AVQLLKGIFIIIAVKLLSGFF, and TVEWITDQMLTWGFLAIIIIF. The region spanning 82-242 is the DAC domain; the sequence is QPELRRALET…GGELFRDVSE (161 aa).

It belongs to the adenylate cyclase family. DacA/CdaA subfamily. As to quaternary structure, probably a homodimer.

The protein resides in the cell membrane. The catalysed reaction is 2 ATP = 3',3'-c-di-AMP + 2 diphosphate. Functionally, catalyzes the condensation of 2 ATP molecules into cyclic di-AMP (c-di-AMP), a signaling compound secreted into the host's cytosol where it triggers the cytosolic surveillance pathway (CSP), a host pathway of innate immunity characterized by expression of beta interferon (IFN-beta) and coregulated genes. Overexpression increases export of c-di-AMP. c-di-AMP is a second messenger that mediates growth, cell wall stability and virulence. This is Diadenylate cyclase from Listeria monocytogenes serotype 1/2a (strain 10403S).